Here is a 329-residue protein sequence, read N- to C-terminus: Malate dehydrogenase (329 aa).

12-18 lines the NAD(+) pocket; that stretch reads GAAGQIG. The substrate site is built by Arg95 and Arg101. NAD(+) contacts are provided by residues Asn108, Gln115, and 132 to 134; that span reads VGN. Positions 134 and 165 each coordinate substrate. Catalysis depends on His190, which acts as the Proton acceptor.

The protein belongs to the LDH/MDH superfamily. MDH type 2 family.

It catalyses the reaction (S)-malate + NAD(+) = oxaloacetate + NADH + H(+). Catalyzes the reversible oxidation of malate to oxaloacetate. The sequence is that of Malate dehydrogenase from Polynucleobacter necessarius subsp. necessarius (strain STIR1).